Reading from the N-terminus, the 224-residue chain is ATP-dependent dethiobiotin synthetase BioD (224 aa).

12–17 (GVGKTF) lines the ATP pocket. Residue Thr-16 coordinates Mg(2+). Residue Lys-37 is part of the active site. Thr-41 contributes to the substrate binding site. Glu-107 serves as a coordination point for Mg(2+). Residues 107-110 (EGAG), 167-168 (GS), 197-199 (PEG), and Glu-204 contribute to the ATP site.

The protein belongs to the dethiobiotin synthetase family. As to quaternary structure, homodimer. It depends on Mg(2+) as a cofactor.

It is found in the cytoplasm. The catalysed reaction is (7R,8S)-7,8-diammoniononanoate + CO2 + ATP = (4R,5S)-dethiobiotin + ADP + phosphate + 3 H(+). It participates in cofactor biosynthesis; biotin biosynthesis; biotin from 7,8-diaminononanoate: step 1/2. Its function is as follows. Catalyzes a mechanistically unusual reaction, the ATP-dependent insertion of CO2 between the N7 and N8 nitrogen atoms of 7,8-diaminopelargonic acid (DAPA, also called 7,8-diammoniononanoate) to form a ureido ring. This Corynebacterium glutamicum (strain R) protein is ATP-dependent dethiobiotin synthetase BioD.